The chain runs to 790 residues: Accumulates dyads protein 3 (790 aa).

The interval 8 to 122 (LNKPESLKEQ…NTLKSPNKFL (115 aa)) is disordered. Over residues 39–49 (PESKPFRERRS) the composition is skewed to basic and acidic residues. 2 stretches are compositionally biased toward polar residues: residues 50 to 78 (QTWIDSEVPTSTEKSNVQESISSDIISKL) and 89 to 108 (ESWAGSEASSPSGNISTLEN). 4 coiled-coil regions span residues 241 to 328 (ISKE…REEK), 361 to 430 (LVSE…RLND), 477 to 498 (KNLENMEQYKQLKGKIELLEKN), and 540 to 658 (QQFR…LKKL).

In terms of assembly, interacts directly with SSP1. Probable component of a SPB complex composed of ADY3, SSP1, DON1, MPC54, SPO21/MPC70, NUD1 and CNM67. In terms of processing, phosphorylated.

It is found in the prospore membrane. It localises to the cytoplasm. The protein localises to the cytoskeleton. Its subcellular location is the microtubule organizing center. The protein resides in the spindle pole body. Functionally, involved in the pathway that organizes the prospore membrane (PSM) during sporulation. Mediates the assembly of the DON1 ring structure at the leading edge of PSM during meiosis II. May constitute a physical link between SSP1-containing PSM precursors and the spindle pole body (SPB) and may facilitate the recruitment of other factors that are required to promote spore wall formation. The chain is Accumulates dyads protein 3 (ADY3) from Saccharomyces cerevisiae (strain ATCC 204508 / S288c) (Baker's yeast).